Consider the following 1528-residue polypeptide: Cell surface antigen I/II (1528 aa).

Residues 1–50 (MLQKCKLEGIIICNEKRLLGAAKVKSGRTLSGALLGTAILASGAGQKALA) form the signal peptide. The tract at residues 50–156 (AEETSTTSTS…PEIKDDYSKQ (107 aa)) is disordered. A compositionally biased stretch (low complexity) spans 51 to 68 (EETSTTSTSGGDTAVVGT). 2 stretches are compositionally biased toward polar residues: residues 83–97 (NPSS…QARQ) and 124–133 (TVSQDATVNK). The span at 142–154 (ANQKEPEIKDDYS) shows a compositional bias: basic and acidic residues. 4 Ag I/II A repeats span residues 161-235 (QKAT…QQAN), 236-315 (SDSQ…QAGN), 316-396 (AANE…QSGN), and 397-478 (AANE…KKDL). Disordered regions lie at residues 840-951 (VPKV…VEPV) and 1459-1480 (SNTV…PKTT). Over residues 855 to 879 (TKPDEPTYEVEKELVDLPVEPKYEP) the composition is skewed to basic and acidic residues. Residues 1459–1468 (SNTVRTSTPE) show a composition bias toward polar residues. Positions 1503 to 1507 (LPATG) match the LPXTG sorting signal motif. Pentaglycyl murein peptidoglycan amidated threonine is present on Thr1506. A propeptide spans 1507-1528 (GDSSNAYLPLLGLVSLTAGFSC) (removed by sortase).

The protein belongs to the antigen I/II family.

It is found in the secreted. The protein resides in the cell wall. The chain is Cell surface antigen I/II from Streptococcus downei (Streptococcus sobrinus).